A 626-amino-acid chain; its full sequence is Cysteine desulfurase (626 aa).

Disordered regions lie at residues 1 to 21 (MTNTVPSVPAVPNLPTQSDPF) and 41 to 64 (AGVSEAESAPTPLSVPTPALPTTS). The tract at residues 1–225 (MTNTVPSVPA…AGAVGFDIHQ (225 aa)) is cargo-loading domain. Residues 226–626 (VRRDFPILQE…RRIQTGSLAL (401 aa)) form a cysteine desulfurase domain region. Lys-444 bears the N6-(pyridoxal phosphate)lysine mark. Residue Cys-582 is the Cysteine persulfide intermediate of the active site.

Belongs to the class-V pyridoxal-phosphate-dependent aminotransferase family. Csd subfamily. There are 1-2 copies of this protein in each type 2A encapsulin shell. Requires pyridoxal 5'-phosphate as cofactor.

The protein localises to the encapsulin nanocompartment. The catalysed reaction is (sulfur carrier)-H + L-cysteine = (sulfur carrier)-SH + L-alanine. Encapsulated enzyme is 7-fold more active than encapsulated enzyme. Cargo protein of a type 2A encapsulin nanocompartment probably involved in sulfur metabolism. Cysteine desulfurases mobilize the sulfur from L-cysteine to yield L-alanine, an essential step in sulfur metabolism for biosynthesis of a variety of sulfur-containing biomolecules. In Synechococcus elongatus (strain ATCC 33912 / PCC 7942 / FACHB-805) (Anacystis nidulans R2), this protein is Cysteine desulfurase.